Consider the following 125-residue polypeptide: Histone H2B type 1 (125 aa).

Positions 1–36 (MPEPAKSRPAPKKGSKKAVTKAQKKDGKERKRSRKE) are disordered. At proline 2 the chain carries N-acetylproline. Glutamate 3 carries the post-translational modification ADP-ribosyl glutamic acid. Residue lysine 6 is modified to N6-(2-hydroxyisobutyryl)lysine; alternate. At lysine 6 the chain carries N6-(beta-hydroxybutyryl)lysine; alternate. Lysine 6 is subject to N6-acetyllysine; alternate. N6-butyryllysine; alternate is present on lysine 6. An N6-crotonyllysine; alternate modification is found at lysine 6. Position 6 is an N6-lactoyllysine; alternate (lysine 6). A Glycyl lysine isopeptide (Lys-Gly) (interchain with G-Cter in SUMO2); alternate cross-link involves residue lysine 6. The residue at position 7 (serine 7) is an ADP-ribosylserine. Over residues 9 to 19 (PAPKKGSKKAV) the composition is skewed to basic residues. An N6-(beta-hydroxybutyryl)lysine; alternate modification is found at lysine 12. Lysine 12 and lysine 13 each carry N6-acetyllysine; alternate. An N6-crotonyllysine; alternate mark is found at lysine 12 and lysine 13. Lysine 12 is subject to N6-lactoyllysine; alternate. The residue at position 13 (lysine 13) is an N6-(2-hydroxyisobutyryl)lysine; alternate. At serine 15 the chain carries Phosphoserine; by STK4/MST1. 4 positions are modified to N6-acetyllysine; alternate: lysine 16, lysine 17, lysine 21, and lysine 24. N6-crotonyllysine; alternate is present on residues lysine 16, lysine 17, lysine 21, and lysine 24. N6-lactoyllysine; alternate is present on residues lysine 16, lysine 17, lysine 21, and lysine 24. Lysine 17 bears the N6-glutaryllysine; alternate mark. An N6-(2-hydroxyisobutyryl)lysine; alternate mark is found at lysine 21 and lysine 24. N6-(beta-hydroxybutyryl)lysine; alternate is present on lysine 21. Lysine 21 bears the N6-butyryllysine; alternate mark. Lysine 21 participates in a covalent cross-link: Glycyl lysine isopeptide (Lys-Gly) (interchain with G-Cter in SUMO2); alternate. Residue lysine 25 is modified to N6-(2-hydroxyisobutyryl)lysine. Lysine 35 bears the N6-(2-hydroxyisobutyryl)lysine; alternate mark. An N6-(beta-hydroxybutyryl)lysine; alternate modification is found at lysine 35. An N6-crotonyllysine; alternate modification is found at lysine 35. An N6-glutaryllysine; alternate modification is found at lysine 35. Position 35 is an N6-succinyllysine; alternate (lysine 35). Lysine 35 is covalently cross-linked (Glycyl lysine isopeptide (Lys-Gly) (interchain with G-Cter in ubiquitin); alternate). Glutamate 36 carries the polyADP-ribosyl glutamic acid modification. Serine 37 is subject to Phosphoserine; by AMPK. An N6-(2-hydroxyisobutyryl)lysine; alternate mark is found at lysine 44, lysine 47, and lysine 58. Lysine 44 carries the post-translational modification N6-lactoyllysine; alternate. N6-glutaryllysine; alternate occurs at positions 44 and 47. Lysine 47 carries the N6-methyllysine; alternate modification. N6,N6-dimethyllysine; alternate is present on lysine 58. Dimethylated arginine is present on arginine 79. Lysine 85 is modified (N6-(2-hydroxyisobutyryl)lysine; alternate). At lysine 85 the chain carries N6-acetyllysine; alternate. Position 85 is an N6-lactoyllysine; alternate (lysine 85). Position 85 is an N6,N6,N6-trimethyllysine; alternate (lysine 85). 2 positions are modified to omega-N-methylarginine: arginine 86 and arginine 92. Position 108 is an N6-(2-hydroxyisobutyryl)lysine; alternate (lysine 108). Lysine 108 bears the N6-lactoyllysine; alternate mark. Lysine 108 carries the N6-glutaryllysine; alternate modification. Lysine 108 carries the N6-methyllysine; alternate modification. Serine 112 carries O-linked (GlcNAc) serine glycosylation. A Phosphothreonine modification is found at threonine 115. Lysine 116 and lysine 120 each carry N6-(2-hydroxyisobutyryl)lysine; alternate. Lysine 116 carries the post-translational modification N6-(beta-hydroxybutyryl)lysine; alternate. An N6-lactoyllysine; alternate mark is found at lysine 116 and lysine 120. N6-glutaryllysine; alternate occurs at positions 116 and 120. Residues lysine 116 and lysine 120 each carry the N6-succinyllysine; alternate modification. N6-methylated lysine; alternate is present on lysine 116. A Glycyl lysine isopeptide (Lys-Gly) (interchain with G-Cter in ubiquitin); alternate cross-link involves residue lysine 120.

Belongs to the histone H2B family. In terms of assembly, the nucleosome is a histone octamer containing two molecules each of H2A, H2B, H3 and H4 assembled in one H3-H4 heterotetramer and two H2A-H2B heterodimers. The octamer wraps approximately 147 bp of DNA. Monoubiquitination at Lys-35 (H2BK34Ub) by the MSL1/MSL2 dimer is required for histone H3 'Lys-4' (H3K4me) and 'Lys-79' (H3K79me) methylation and transcription activation at specific gene loci, such as HOXA9 and MEIS1 loci. Similarly, monoubiquitination at Lys-120 (H2BK120Ub) by the RNF20/40 complex gives a specific tag for epigenetic transcriptional activation and is also prerequisite for histone H3 'Lys-4' and 'Lys-79' methylation. It also functions cooperatively with the FACT dimer to stimulate elongation by RNA polymerase II. H2BK120Ub also acts as a regulator of mRNA splicing: deubiquitination by USP49 is required for efficient cotranscriptional splicing of a large set of exons. In terms of processing, phosphorylated on Ser-15 (H2BS14ph) by STK4/MST1 during apoptosis; which facilitates apoptotic chromatin condensation. Also phosphorylated on Ser-15 in response to DNA double strand breaks (DSBs), and in correlation with somatic hypermutation and immunoglobulin class-switch recombination. Phosphorylation at Ser-37 (H2BS36ph) by AMPK in response to stress promotes transcription. Post-translationally, ADP-ribosylated by PARP1 or PARP2 on Ser-7 (H2BS6ADPr) in response to DNA damage. H2BS6ADPr promotes recruitment of CHD1L. Mono-ADP-ribosylated on Glu-3 (H2BE2ADPr) by PARP3 in response to single-strand breaks. Poly ADP-ribosylation on Glu-36 (H2BE35ADPr) by PARP1 regulates adipogenesis: it inhibits phosphorylation at Ser-37 (H2BS36ph), thereby blocking expression of pro-adipogenetic genes. Crotonylation (Kcr) is specifically present in male germ cells and marks testis-specific genes in post-meiotic cells, including X-linked genes that escape sex chromosome inactivation in haploid cells. Crotonylation marks active promoters and enhancers and confers resistance to transcriptional repressors. It is also associated with post-meiotically activated genes on autosomes. In terms of processing, glcNAcylation at Ser-112 promotes monoubiquitination of Lys-120. It fluctuates in response to extracellular glucose, and associates with transcribed genes. Post-translationally, lactylated in macrophages by EP300/P300 by using lactoyl-CoA directly derived from endogenous or exogenous lactate, leading to stimulates gene transcription.

The protein resides in the nucleus. It is found in the chromosome. Functionally, core component of nucleosome. Nucleosomes wrap and compact DNA into chromatin, limiting DNA accessibility to the cellular machineries which require DNA as a template. Histones thereby play a central role in transcription regulation, DNA repair, DNA replication and chromosomal stability. DNA accessibility is regulated via a complex set of post-translational modifications of histones, also called histone code, and nucleosome remodeling. Its function is as follows. Has broad antibacterial activity. May contribute to the formation of the functional antimicrobial barrier of the colonic epithelium, and to the bactericidal activity of amniotic fluid. This Rattus norvegicus (Rat) protein is Histone H2B type 1.